A 466-amino-acid polypeptide reads, in one-letter code: 55 kDa erythrocyte membrane protein (466 aa).

An N-acetylthreonine modification is found at Thr-2. Ser-13 and Ser-19 each carry phosphoserine. Thr-49 carries the post-translational modification Phosphothreonine. 3 positions are modified to phosphoserine: Ser-52, Ser-57, and Ser-110. Residues 71–152 (LIQFEKVTEE…MISLKVIPNQ (82 aa)) form the PDZ domain. An SH3 domain is found at 158–228 (ALQMFMRAQF…PSPELQEWRV (71 aa)). Ser-243 is subject to Phosphoserine. The tract at residues 268–466 (VVSYEEVVRL…PQWVPVSWVY (199 aa)) is interaction with PALS1. The Guanylate kinase-like domain occupies 282-451 (RKTLVLIGAS…TLKKLQEAFD (170 aa)).

It belongs to the MAGUK family. As to quaternary structure, heterodimer with PALS1. Interacts with DLG5 and NF2. Interacts (via guanylate kinase-like domain) with WHRN (via third PDZ domain). Palmitoylated. As to expression, ubiquitous.

Its subcellular location is the cell membrane. It localises to the cell projection. The protein localises to the stereocilium. In terms of biological role, essential regulator of neutrophil polarity. Regulates neutrophil polarization by regulating AKT1 phosphorylation through a mechanism that is independent of PIK3CG activity. The sequence is that of 55 kDa erythrocyte membrane protein (MPP1) from Homo sapiens (Human).